The following is a 353-amino-acid chain: D-alanine--D-alanine ligase (353 aa).

An ATP-grasp domain is found at 141-349; that stretch reads KAAFAAAGLS…LPQLVAELVD (209 aa). 176-231 is an ATP binding site; sequence EQELGYPCFVKPANLGSSVGITKANNRDELLAGLHQAAALDPRLLVEQGVNARELE. Positions 302, 316, and 318 each coordinate Mg(2+).

This sequence belongs to the D-alanine--D-alanine ligase family. Requires Mg(2+) as cofactor. It depends on Mn(2+) as a cofactor.

It is found in the cytoplasm. It catalyses the reaction 2 D-alanine + ATP = D-alanyl-D-alanine + ADP + phosphate + H(+). Its pathway is cell wall biogenesis; peptidoglycan biosynthesis. Cell wall formation. The polypeptide is D-alanine--D-alanine ligase (Synechococcus sp. (strain WH7803)).